Here is an 800-residue protein sequence, read N- to C-terminus: Phosphate transporter PHO1 homolog 9 (800 aa).

The region spanning Met-1–Asn-346 is the SPX domain. Over Met-1–Thr-398 the chain is Cytoplasmic. 3 disordered regions span residues Gln-38–Ser-77, Asn-91–His-119, and Pro-212–Ser-234. The span at Arg-42 to Ser-51 shows a compositional bias: pro residues. Residues Gly-63–Gly-75 show a composition bias toward gly residues. Over residues Arg-95–His-119 the composition is skewed to basic residues. The segment covering Ser-216–Arg-229 has biased composition (polar residues). A helical transmembrane segment spans residues Tyr-399–Val-419. Residues His-420–Pro-439 lie on the Extracellular side of the membrane. A helical membrane pass occupies residues Leu-440–Phe-460. The Cytoplasmic segment spans residues Trp-461–Arg-483. A helical transmembrane segment spans residues Glu-484–Leu-504. Residues Asp-505 to Glu-520 are Extracellular-facing. A helical membrane pass occupies residues Leu-521–Ile-541. Topologically, residues Tyr-542–Trp-670 are cytoplasmic. One can recognise an EXS domain in the interval Tyr-606–Val-800. The helical transmembrane segment at Leu-671 to Phe-691 threads the bilayer. Over Arg-692–Tyr-718 the chain is Extracellular. A helical transmembrane segment spans residues Phe-719 to Ile-739. The Cytoplasmic portion of the chain corresponds to Lys-740–Val-800.

Belongs to the SYG1 (TC 2.A.94) family. As to expression, specifically expressed in pollen grains.

The protein localises to the cell membrane. Functionally, may transport inorganic phosphate (Pi). This is Phosphate transporter PHO1 homolog 9 (PHO1-H9) from Arabidopsis thaliana (Mouse-ear cress).